Reading from the N-terminus, the 217-residue chain is Chorionic somatomammotropin hormone 2 (217 aa).

An N-terminal signal peptide occupies residues Met1–Ala26. His44 contributes to the Zn(2+) binding site. Cys79 and Cys191 are oxidised to a cystine. Glu200 is a Zn(2+) binding site. Cys208 and Cys215 are joined by a disulfide.

It belongs to the somatotropin/prolactin family. Can be found in a monomeric as well as dimeric form.

The protein localises to the secreted. Functionally, produced only during pregnancy and is involved in stimulating lactation, fetal growth and metabolism. Does not interact with GHR but only activates PRLR through zinc-induced dimerization. This is Chorionic somatomammotropin hormone 2 (CSH2) from Homo sapiens (Human).